Reading from the N-terminus, the 379-residue chain is uncharacterized protein (379 aa).

Disordered stretches follow at residues 1 to 20 (MLPQ…PVGP), 227 to 290 (VSQR…LQGH), and 331 to 371 (PGCA…RAGH). Residues 7 to 20 (QVVHGVQDGPPVGP) are compositionally biased toward low complexity. A compositionally biased stretch (basic and acidic residues) spans 249–261 (GCKDPRVRKEPGR).

This is an uncharacterized protein from Dryophytes versicolor (chameleon treefrog).